Consider the following 1025-residue polypeptide: Error-prone DNA polymerase (1025 aa).

This sequence belongs to the DNA polymerase type-C family. DnaE2 subfamily.

Its subcellular location is the cytoplasm. It carries out the reaction DNA(n) + a 2'-deoxyribonucleoside 5'-triphosphate = DNA(n+1) + diphosphate. Its function is as follows. DNA polymerase involved in damage-induced mutagenesis and translesion synthesis (TLS). It is not the major replicative DNA polymerase. The polypeptide is Error-prone DNA polymerase (Alkalilimnicola ehrlichii (strain ATCC BAA-1101 / DSM 17681 / MLHE-1)).